A 204-amino-acid chain; its full sequence is NNYCKIKCLKGGVHTACKYGSLKPNCGNKKVVSYGLTKQEKQDILKEHNDFRQKIARGLETRGNPGPQPPAKNMKNLVWSDELAYIAQVWANQCQYGHDTCRDVAKYQVGQNVALTGSTAAVYNDPVKLVKMWEDEVKDYNPKKKFSENNFLKIGHYTQMVWANTKEVGCGSIKYIQENWHKHYLVCNYGPSGNFQNEELYQTK.

Cystine bridges form between Cys-4–Cys-17, Cys-8–Cys-101, Cys-26–Cys-94, and Cys-170–Cys-187. Positions 45–189 (LKEHNDFRQK…WHKHYLVCNY (145 aa)) constitute an SCP domain.

Belongs to the CRISP family. Venom allergen 5-like subfamily. In terms of tissue distribution, expressed by the venom gland.

Its subcellular location is the secreted. The chain is Venom allergen 5 from Vespula maculifrons (Eastern yellow jacket).